Consider the following 88-residue polypeptide: uncharacterized protein (88 aa).

Residues 1–24 (MLPRSCKDFYETLRTAVLCGQACA) form the signal peptide.

To Rhizobium NGR234A y4oL.

This is an uncharacterized protein from Sinorhizobium fredii (strain NBRC 101917 / NGR234).